A 309-amino-acid chain; its full sequence is Taste receptor type 2 member 124 (309 aa).

Residues 1–7 (MVPVLHS) are Extracellular-facing. A helical transmembrane segment spans residues 8 to 28 (LSTIILIAEFVWGNLSNGLIV). Residues 29 to 46 (LKNCIDWINKKELSTVDQ) are Cytoplasmic-facing. The helical transmembrane segment at 47–67 (ILIVLAISRISLIWETLIIWV) threads the bilayer. Over 68-86 (KDQLISSITIEELKIIVFS) the chain is Extracellular. Residues 87-107 (FILSSHFSLWLATALSIFYLF) form a helical membrane-spanning segment. The Cytoplasmic portion of the chain corresponds to 108–127 (RIPNCYWQIFLYLKWRIKQL). A helical membrane pass occupies residues 128 to 148 (IVHMLLGSLVFLVANMIQITI). Residues 149-183 (TLEERFYQYGGNTSVNSMETEFSILIELMLFNMTM) are Extracellular-facing. Asn160 and Asn180 each carry an N-linked (GlcNAc...) asparagine glycan. A helical membrane pass occupies residues 184 to 204 (FSIIPFSLALISFLLLIFSLW). At 205 to 230 (KHLQKMPLNSRGDRDPSATAHRNALR) the chain is on the cytoplasmic side. Residues 231-251 (ILVSFLLLYTIYFLSLLISWV) traverse the membrane as a helical segment. At 252-261 (AQKNQSELVH) the chain is on the extracellular side. The N-linked (GlcNAc...) asparagine glycan is linked to Asn255. A helical membrane pass occupies residues 262–282 (IICMITSLVYPSFHSYILILG). The Cytoplasmic segment spans residues 283–309 (NYKLKQTSLWVMRQLGCRMKRQNTPTT).

It belongs to the G-protein coupled receptor T2R family.

The protein resides in the membrane. Putative taste receptor which may play a role in the perception of bitterness. This is Taste receptor type 2 member 124 from Mus musculus (Mouse).